Here is a 372-residue protein sequence, read N- to C-terminus: Beta sliding clamp (372 aa).

It belongs to the beta sliding clamp family. As to quaternary structure, forms a ring-shaped head-to-tail homodimer around DNA which binds and tethers DNA polymerases and other proteins to the DNA. The DNA replisome complex has a single clamp-loading complex (3 tau and 1 each of delta, delta', psi and chi subunits) which binds 3 Pol III cores (1 core on the leading strand and 2 on the lagging strand) each with a beta sliding clamp dimer. Additional proteins in the replisome are other copies of gamma, psi and chi, Ssb, DNA helicase and RNA primase.

Its subcellular location is the cytoplasm. Confers DNA tethering and processivity to DNA polymerases and other proteins. Acts as a clamp, forming a ring around DNA (a reaction catalyzed by the clamp-loading complex) which diffuses in an ATP-independent manner freely and bidirectionally along dsDNA. Initially characterized for its ability to contact the catalytic subunit of DNA polymerase III (Pol III), a complex, multichain enzyme responsible for most of the replicative synthesis in bacteria; Pol III exhibits 3'-5' exonuclease proofreading activity. The beta chain is required for initiation of replication as well as for processivity of DNA replication. This chain is Beta sliding clamp (dnaN), found in Caulobacter vibrioides (strain ATCC 19089 / CIP 103742 / CB 15) (Caulobacter crescentus).